A 275-amino-acid chain; its full sequence is Protein unc-50 homolog (275 aa).

Polar residues predominate over residues 1–26; that stretch reads MTQYSHVKYTQSPTPSVVSGYSSASR. Positions 1-39 are disordered; sequence MTQYSHVKYTQSPTPSVVSGYSSASRLHSPLPPPANHRR. The Cytoplasmic portion of the chain corresponds to 1–99; the sequence is MTQYSHVKYT…TKSQFARDDP (99 aa). Residues 100-120 traverse the membrane as a helical segment; sequence AFLVLLVVCLCVTSLGFAYVL. Residues 121–129 are Lumenal-facing; it reads GLSFWQSIS. The chain crosses the membrane as a helical span at residues 130–150; it reads FIFYVVFVDCIFVGIIIASFF. Topologically, residues 151–178 are cytoplasmic; it reads WAVTNRYLRTNSLEPDIEWGYAFDVHLN. The helical transmembrane segment at 179–199 threads the bilayer; sequence AFFPPLMLLHFIQLFFYNWLI. Residues 200–207 lie on the Lumenal side of the membrane; it reads SQTWFISR. A helical membrane pass occupies residues 208–228; it reads FLGNTFWLMGMGYYVYITFLG. Residues 229–239 lie on the Cytoplasmic side of the membrane; the sequence is YNCIPHLKNTR. The chain crosses the membrane as a helical span at residues 240–260; it reads IILIALPIIFLLFLVVTIIGW. Residues 261 to 275 lie on the Lumenal side of the membrane; sequence NATISFVNFYKYRVY.

This sequence belongs to the unc-50 family.

It localises to the golgi apparatus membrane. Its function is as follows. Required for cell surface expression of acetylcholine receptors. This is Protein unc-50 homolog from Drosophila melanogaster (Fruit fly).